We begin with the raw amino-acid sequence, 362 residues long: 4-hydroxytryptamine kinase (362 aa).

ATP contacts are provided by residues asparagine 37, lysine 57, and 118–120 (QDV). The active site involves aspartate 224. Residue 249–251 (DWE) participates in ATP binding.

It belongs to the methylthioribose kinase family. Monomer. Mg(2+) serves as cofactor.

The catalysed reaction is 4-hydroxytryptamine + ATP = norbaeocystin + ADP + H(+). The enzyme catalyses psilocin + ATP = psilocybin + ADP + H(+). It carries out the reaction 4-hydroxy-N,N,N-trimethyltryptamine + ATP = aeruginascin + ADP + H(+). Its pathway is secondary metabolite biosynthesis. In terms of biological role, 4-hydroxytryptamine kinase; part of the gene cluster that mediates the biosynthesis of psilocybin, a psychotropic tryptamine-derived natural product. The first step in the pathway is the decarboxylation of L-tryptophan to tryptamine by the decarboxylase psiD. 4-hydroxy-L-tryptophan is accepted as substrate by psiD as well. The cytochrome P450 monooxygenase psiH then converts tryptamine to 4-hydroxytryptamine. The kinase psiK catalyzes the 4-O-phosphorylation step by converting 4-hydroxytryptamine into norbaeocystin. The methyltransferase psiM then catalyzes iterative methyl transfer to the amino group of norbaeocystin to yield psilocybin via a monomethylated intermediate, baeocystin. 4-hydroxy-6-methyl-l-tryptophancan also be converted the decarboxylase PsiD, kinase PsiK, and methyltransferase PsiM into respectively 6-methyl-norbaeocystin, 6-methylbaeocystin, and 6-methylpsilocybin. PsiK kinase can also turn psilocin into psilocybin. This activity may represent a protective mechanism to rephosphorylate the unstable psilocin to the stable psilocybin in case of intracellular ester cleavage. Moreover, psiK is able to O-phosphorylate the quaternary amine 4-hydroxy-N,N,N-trimethyltryptamine (4-OH-TMT) to yield aeruginascin, another bioactive compound found in Psilocybe species. In Psilocybe cubensis (Psychedelic mushroom), this protein is 4-hydroxytryptamine kinase.